The sequence spans 210 residues: Large ribosomal subunit protein uL16 (210 aa).

This sequence belongs to the universal ribosomal protein uL16 family. Component of the large ribosomal subunit. Mature ribosomes consist of a small (40S) and a large (60S) subunit. The 40S subunit contains about 33 different proteins and 1 molecule of RNA (18S). The 60S subunit contains about 49 different proteins and 3 molecules of RNA (28S, 5.8S and 5S).

It localises to the cytoplasm. In terms of biological role, component of the large ribosomal subunit. Plays a role in the formation of actively translating ribosomes. Its function is as follows. (Microbial infection) Seems to bind to the leucine zipper of viral and cellular JUN. This is Large ribosomal subunit protein uL16 from Gallus gallus (Chicken).